A 274-amino-acid chain; its full sequence is MGVRIYKPTSAGRRNMSVSTFEEITKKEPEPRLIEPLRKKAGRNNQGRITVRHRGGGHKRFYRIIDFKRNKFGVPAKVQAIEYDPNRTARIALLAYADGEKRYIIAPLGLKVGDTVMSGPDAEIRVGNALPLSAIPLGTQIHNIELEIGRGGVLVRSAGTAAQLMAKEGDYAIVRMPSGEMRMIHLRCMATIGQVGNVDHQNIRLGKAGRSRWLGRRPRVRGAAMNPRDHPHGGGEGRAPRGMSTPKTKWGKPARGVKTRHNPRFDRFIVRRRK.

Positions 220-265 (VRGAAMNPRDHPHGGGEGRAPRGMSTPKTKWGKPARGVKTRHNPRF) are disordered. Residues 227–239 (PRDHPHGGGEGRA) are compositionally biased toward basic and acidic residues. Residues 249–262 (KWGKPARGVKTRHN) are compositionally biased toward basic residues.

It belongs to the universal ribosomal protein uL2 family. In terms of assembly, part of the 50S ribosomal subunit. Forms a bridge to the 30S subunit in the 70S ribosome.

Its function is as follows. One of the primary rRNA binding proteins. Required for association of the 30S and 50S subunits to form the 70S ribosome, for tRNA binding and peptide bond formation. It has been suggested to have peptidyltransferase activity; this is somewhat controversial. Makes several contacts with the 16S rRNA in the 70S ribosome. In Chloroflexus aurantiacus (strain ATCC 29364 / DSM 637 / Y-400-fl), this protein is Large ribosomal subunit protein uL2.